A 535-amino-acid polypeptide reads, in one-letter code: Sodium channel protein Nach (535 aa).

Topologically, residues 1-49 are cytoplasmic; the sequence is MGHQEELKPEQVDLKVTPFVGYLRRTWSDFCATSSIHGLKYTRDEDTNK. Residues 50–70 traverse the membrane as a helical segment; sequence IVHLVWLLISVVMFICAVVMA. Residues 71-471 are Extracellular-facing; sequence RTFYMDYRSS…LVSNLGSAFS (401 aa). Residues Asn-165, Asn-239, and Asn-367 are each glycosylated (N-linked (GlcNAc...) asparagine). The chain crosses the membrane as a helical span at residues 472 to 492; it reads LFVGMSMLSVVEIIYYFSVIL. Over 493–535 the chain is Cytoplasmic; that stretch reads RKNYKLECETRSQMLHKKPKFAWPKANDTHSKEQKSVFIIHKS.

This sequence belongs to the amiloride-sensitive sodium channel (TC 1.A.6) family. As to expression, embryonic and larval tracheal system; dorsal trunk (but not at fusion with transverse connective), several branches and terminal cells. Also expressed in adult tracheal system; dorsal trunk, but not at the spiracles.

The protein resides in the membrane. Functionally, part of a complex that plays a role in tracheal liquid clearance. Probable role in sodium transport. This chain is Sodium channel protein Nach (Nach), found in Drosophila melanogaster (Fruit fly).